A 440-amino-acid chain; its full sequence is Probable pectate lyase 10 (440 aa).

An N-terminal signal peptide occupies residues 1 to 28 (MVIFSRSFLALSTTLIILALCINSSTMA). A disordered region spans residues 32 to 56 (EDLNSHSSSNSSTANKLPNDDGAWN). 2 N-linked (GlcNAc...) asparagine glycosylation sites follow: Asn41 and Asn76. The Ca(2+) site is built by Asp238, Asp262, and Asp266. The active site involves Arg318.

The protein belongs to the polysaccharide lyase 1 family. Ca(2+) serves as cofactor.

The catalysed reaction is Eliminative cleavage of (1-&gt;4)-alpha-D-galacturonan to give oligosaccharides with 4-deoxy-alpha-D-galact-4-enuronosyl groups at their non-reducing ends.. It functions in the pathway glycan metabolism; pectin degradation; 2-dehydro-3-deoxy-D-gluconate from pectin: step 2/5. In Arabidopsis thaliana (Mouse-ear cress), this protein is Probable pectate lyase 10.